An 854-amino-acid chain; its full sequence is Aryl hydrocarbon receptor (854 aa).

The propeptide occupies 1–9 (MSSGANITY). The disordered stretch occupies residues 1–38 (MSSGANITYASRKRRKPVQKTVKPIPAEGIKSNPSKRH). 2 consecutive short sequence motifs (nuclear localization signal) follow at residues 12 to 15 (RKRR) and 36 to 41 (KRHRDR). Positions 26 to 79 (PAEGIKSNPSKRHRDRLNTELDRLASLLPFPQDVINKLDKLSVLRLSVSYLRAK) constitute a bHLH domain. The tract at residues 37–65 (RHRDRLNTELDRLASLLPFPQDVINKLDK) is DNA-binding. Required for maintaining the overall integrity of the AHR:ARNT heterodimer and its transcriptional activity stretches follow at residues 49 to 81 (LASL…AKSF), 116 to 124 (LLQALNGFV), and 264 to 266 (FAI). The short motif at 63 to 71 (LDKLSVLRL) is the Nuclear export signal element. In terms of domain architecture, PAS 1 spans 111–175 (QEGEFLLQAL…AEFQRQLHWA (65 aa)). The 71-residue stretch at 270 to 340 (LQPPSILEIR…CAESHIRMIK (71 aa)) folds into the PAS 2 domain. Residues 346 to 387 (MTVFRLLAKHSRWRWVQSNARLIYRNGRPDYIIATQRPLTDE) form the PAC domain. The tract at residues 425–452 (LPIRTKSNTSRKDWAPQSTPSKDSFHPS) is disordered. A compositionally biased stretch (polar residues) spans 440–452 (PQSTPSKDSFHPS).

In terms of assembly, homodimer. Heterodimer; efficient DNA binding requires dimerization with another bHLH protein. Interacts with ARNT; the heterodimer ARNT:AHR binds to core DNA sequence 5'-TGCGTG-3' within the dioxin response element (DRE) of target gene promoters and activates their transcription. Binds MYBBP1A. Interacts with coactivators including SRC-1, RIP140 and NOCA7, and with the corepressor SMRT. Interacts with NEDD8 and IVNS1ABP. Interacts with BMAL1. Interacts with HSP90AB1. Interacts with TIPARP; leading to mono-ADP-ribosylation of AHR and subsequent inhibition of AHR. Post-translationally, mono-ADP-ribosylated, leading to inhibit transcription activator activity of AHR.

The protein localises to the cytoplasm. It is found in the nucleus. Functionally, ligand-activated transcription factor that enables cells to adapt to changing conditions by sensing compounds from the environment, diet, microbiome and cellular metabolism, and which plays important roles in development, immunity and cancer. Upon ligand binding, translocates into the nucleus, where it heterodimerizes with ARNT and induces transcription by binding to xenobiotic response elements (XRE). Regulates a variety of biological processes, including angiogenesis, hematopoiesis, drug and lipid metabolism, cell motility and immune modulation. Xenobiotics can act as ligands: upon xenobiotic-binding, activates the expression of multiple phase I and II xenobiotic chemical metabolizing enzyme genes (such as the CYP1A1 gene). Mediates biochemical and toxic effects of halogenated aromatic hydrocarbons. Next to xenobiotics, natural ligands derived from plants, microbiota, and endogenous metabolism are potent AHR agonists. Tryptophan (Trp) derivatives constitute an important class of endogenous AHR ligands. Acts as a negative regulator of anti-tumor immunity: indoles and kynurenic acid generated by Trp catabolism act as ligand and activate AHR, thereby promoting AHR-driven cancer cell motility and suppressing adaptive immunity. Regulates the circadian clock by inhibiting the basal and circadian expression of the core circadian component PER1. Inhibits PER1 by repressing the CLOCK-BMAL1 heterodimer mediated transcriptional activation of PER1. The heterodimer ARNT:AHR binds to core DNA sequence 5'-TGCGTG-3' within the dioxin response element (DRE) of target gene promoters and activates their transcription. This Mus spretus (Western Mediterranean mouse) protein is Aryl hydrocarbon receptor (Ahr).